The chain runs to 286 residues: MTEVITSIQDMQRLAHDFKHDGKSIGFVPTMGALHDGHLTMMRRSVKENDVSVASVFVNPLQFAPGEDYDAYPRDIEKDTKAAESAGIDYVFHPSVEAMYPDEIGVALKVGKLAEVLEGAQRPIHFNGVVTVVNKLFNIVQPDRAYFGKKDAQQLAIVEKMVQDFNHPIEIVGQDIVREDDGLAKSSRNVYLTEQERQEAPALQKSLQLAEKLYREGERESKIIVEAVTAYLESHTSGHVDEVAVYSYPELVEQHHIEGRIFISLAVKFSKARLIDNLIIGDEEID.

31–38 (MGALHDGH) lines the ATP pocket. His38 acts as the Proton donor in catalysis. Position 62 (Gln62) interacts with (R)-pantoate. Gln62 provides a ligand contact to beta-alanine. 148–151 (GKKD) provides a ligand contact to ATP. Gln154 contacts (R)-pantoate. Residues Val177 and 185–188 (KSSR) contribute to the ATP site.

The protein belongs to the pantothenate synthetase family. Homodimer.

It localises to the cytoplasm. It catalyses the reaction (R)-pantoate + beta-alanine + ATP = (R)-pantothenate + AMP + diphosphate + H(+). Its pathway is cofactor biosynthesis; (R)-pantothenate biosynthesis; (R)-pantothenate from (R)-pantoate and beta-alanine: step 1/1. Catalyzes the condensation of pantoate with beta-alanine in an ATP-dependent reaction via a pantoyl-adenylate intermediate. In Staphylococcus carnosus (strain TM300), this protein is Pantothenate synthetase.